We begin with the raw amino-acid sequence, 456 residues long: Kynurenine 3-monooxygenase (456 aa).

This sequence belongs to the aromatic-ring hydroxylase family. KMO subfamily. It depends on FAD as a cofactor.

It localises to the mitochondrion outer membrane. It catalyses the reaction L-kynurenine + NADPH + O2 + H(+) = 3-hydroxy-L-kynurenine + NADP(+) + H2O. It functions in the pathway cofactor biosynthesis; NAD(+) biosynthesis; quinolinate from L-kynurenine: step 1/3. Functionally, catalyzes the hydroxylation of L-kynurenine (L-Kyn) to form 3-hydroxy-L-kynurenine (L-3OHKyn). Required for synthesis of quinolinic acid. This is Kynurenine 3-monooxygenase from Candida albicans (strain SC5314 / ATCC MYA-2876) (Yeast).